We begin with the raw amino-acid sequence, 191 residues long: Ribonuclease HII (191 aa).

Positions 7 to 191 (ILMAGVDEVG…YSPVADLISK (185 aa)) constitute an RNase H type-2 domain. A divalent metal cation contacts are provided by Asp-13, Glu-14, and Asp-103.

This sequence belongs to the RNase HII family. Mn(2+) serves as cofactor. Mg(2+) is required as a cofactor.

It is found in the cytoplasm. It carries out the reaction Endonucleolytic cleavage to 5'-phosphomonoester.. Its function is as follows. Endonuclease that specifically degrades the RNA of RNA-DNA hybrids. This is Ribonuclease HII from Legionella pneumophila (strain Paris).